The sequence spans 342 residues: Methyltransferase ungE' (342 aa).

Belongs to the methyltransferase superfamily.

It functions in the pathway secondary metabolite biosynthesis. Methyltransferase; part of the gene cluster that mediates the biosynthesis of the unguisins, gamma-aminobutyric acid (GABA)-containing fungal cyclic heptapeptides with the amino acid sequence cyclo-(D-Ala1-D-Val2-L-Leu3-beta-MePhe4-D-Ala5-D-Trp6-GABA7) for unguisin H and cyclo-(D-Ala1-D-Ala2-L-Leu3-beta-MePhe4-D-Ala5-D-Trp6-GABA7) for unguisin I. Within the pathway, the methyltransferase ungE' is probably involved in the synthesis of the (2R,3R)-beta-methylphenylalanine residue incorporated by the module 4 of the nonribosomal peptide synthetase (NRPS) ungA'. The alanine racemase ungC' catalyzes the interconversion of L-alanine and D-alanine, providing the D-alanine which is accepted by the first adenylation domain of ungA'. UngA' is the main enzyme within the cluster which condenses the 7 residues using its respective 7 modules. The terminal condensation domain (Ct) is involved in cyclization with D-alanine and thereby releasing of unguisins H and I. Finally, the hydrolase ungD' catalyzes the hydrolysis between the D-tryptophan and GABA residues of unguisins H and I to produce the corresponding linear peptides. This is Methyltransferase ungE' from Aspergillus campestris (strain IBT 28561).